Reading from the N-terminus, the 483-residue chain is Acetyltransferase AOL_s00215g273 (483 aa).

Transmembrane regions (helical) follow at residues Ala-9–Val-29, Ile-33–Leu-53, Val-141–Cys-161, Ile-191–Val-211, Phe-292–Gly-312, Val-334–Trp-354, Trp-372–Ile-392, and Leu-453–Phe-473.

It belongs to the wax synthase family.

It localises to the membrane. It participates in secondary metabolite biosynthesis; terpenoid biosynthesis. Acetyltransferase; part of the gene cluster that mediates the biosynthesis of sesquiterpenyl epoxy-cyclohexenoids (SECs) such as anthrobotrisins and arthrosporols, metabolites that possess a novel hybrid carbon skeleton consisting of a polyketide-derived epoxycyclohexenol combined with a terpenoid-derived monocyclic sesquiterpenol substructure (PKS-PTS hybrid). The SEC pathway plays an important role for fungal soil colonization via decreasing fungal nematode-capturing ability. The role of the acetyltransferase in SEC biosynthesis has still to be determined. The pathway begins with the biosynthesis of 6-methylsalicylic acid (6-MSA), the first precursor of the polyketide-derived epoxycyclohexenol in arthrosporols, by the polyketide synthase (PKS) AOL_s00215g283 via condensation of 1 acetate and 3 malonate units. The 6-methylsalicylic acid decarboxylase AOL_s00215g281 then catalyzes the decarboxylation of 6-methylsalicylic acid to yield m-cresol. The cytochrome P450 monooxygenase AOL_s00215g282 further oxidizes m-cresol to yield toluquinol. With the assistance of the oxidoreductase AOL_s00215g277, the polyprenyl transferase AOL_s00215g276 catalyzes the farnesylation of toluquinol to produce farnesyl hydroquinone, the hybrid precursor for biosynthesis of SECs. Farnesyl hydroquinone undergoes epoxidation and then subsequent dehydrogenation to form farnesyl epoxy-quinone, the first and simplest SEC. The cytochrome P450 monooxygenase AOL_s00215g278 and the FAD-dependent monooxygenase AOL_s00215g279 might be involved in the oxygenation of the phenol moiety, most likely in the epoxy formation. The cytochrome P450 monooxygenases AOL_s00215g274 and AOL_s00215g280 are involved in specific regional ketone reductions at respectively C-4 and C-1 of farnesyl epoxy-quinone PubMed:33823587. In Arthrobotrys oligospora (strain ATCC 24927 / CBS 115.81 / DSM 1491) (Nematode-trapping fungus), this protein is Acetyltransferase AOL_s00215g273.